Consider the following 64-residue polypeptide: MLPHTSDTTSTFRLKTVFDLVFENRNIIYKADVVNDIIHHRLKVSLPMIKSLFYKMSLPTTITT.

Belongs to the orthopoxviruses VACWR006 protein family.

This is an uncharacterized protein from Vaccinia virus (strain Western Reserve) (VACV).